Here is a 1941-residue protein sequence, read N- to C-terminus: WD repeat-containing protein 81 (1941 aa).

The interval 1-27 is disordered; sequence MAQGSGGREGALRTPAGGWHSPPSPDM. The tract at residues 1–650 is necessary and sufficient for the interaction with SQSTM1; the sequence is MAQGSGGREG…TPCEASWTRD (650 aa). The BEACH domain maps to 337 to 614; it reads GQPTGQEELR…IPKLLVQTIQ (278 aa). 6 disordered regions span residues 618–637, 694–718, 1022–1074, 1097–1217, 1523–1556, and 1569–1602; these read GRED…GRPV, VASA…EEGR, SKDL…VSFH, PQEA…EGKE, PSSR…DGHS, and QIPN…DNAL. The segment covering 1137-1146 has biased composition (polar residues); that stretch reads LRSGDSSQDL. Residues 1151 to 1174 are compositionally biased toward acidic residues; it reads GSEEEEEEEDSCVVLEEEEGEQEE. Residues 1586 to 1595 show a composition bias toward gly residues; the sequence is SGVGGGGLGS. WD repeat units follow at residues 1639-1677, 1686-1724, 1729-1769, 1777-1815, 1819-1856, 1860-1896, and 1902-1941; these read IRLQ…LWPL, ETAP…VWDP, TLRT…FVDC, EFRL…LLDT, LVLR…VWKE, KPTH…VCSL, and QATT…RLLA.

Belongs to the WD repeat WDR81 family. In terms of assembly, interacts with WDR91; involved in early to late endosome cargo transport. Interacts with BECN1; negatively regulates the PI3 kinase/PI3K activity associated with endosomal membranes. Interacts with SQSTM1; the interaction is direct and regulates the interaction of SQSTM1 with ubiquitinated proteins. Interacts with MAP1LC3C; recruits MAP1LC3C to ubiquitinated protein aggregates in the aggrephagy process. As to expression, widely expressed. In the brain, highest levels in cerebellum and corpus callosum.

It localises to the early endosome membrane. The protein localises to the late endosome membrane. The protein resides in the lysosome membrane. Its subcellular location is the cytoplasmic vesicle. It is found in the autophagosome membrane. It localises to the mitochondrion. The protein localises to the cytoplasm. The protein resides in the cytosol. Its function is as follows. Functions as a negative regulator of the PI3 kinase/PI3K activity associated with endosomal membranes via BECN1, a core subunit of the PI3K complex. By modifying the phosphatidylinositol 3-phosphate/PtdInsP3 content of endosomal membranes may regulate endosome fusion, recycling, sorting and early to late endosome transport. It is for instance, required for the delivery of cargos like BST2/tetherin from early to late endosome and thereby participates indirectly to their degradation by the lysosome. May also play a role in aggrephagy, the macroautophagic degradation of ubiquitinated protein aggregates. In this process, may regulate the interaction of SQSTM1 with ubiquitinated proteins and also recruit MAP1LC3C. May also be involved in maintenance of normal mitochondrial structure and organization. The chain is WD repeat-containing protein 81 from Homo sapiens (Human).